Here is a 327-residue protein sequence, read N- to C-terminus: Interleukin-12 subunit beta (327 aa).

Residues 1–22 (MHPQQLVVSWFSLVLLASPIVA) form the signal peptide. One can recognise an Ig-like C2-type domain in the interval 23-106 (MWELEKNVYV…LSRSLLLLHK (84 aa)). An intrachain disulfide couples Cys50 to Cys90. Asn223 carries an N-linked (GlcNAc...) asparagine glycan. In terms of domain architecture, Fibronectin type-III spans 238-327 (PPKNLQLRPL…WSEWASVSCS (90 aa)).

It belongs to the IL-12B family. Heterodimer with IL12A; disulfide-linked. The heterodimer is known as interleukin IL-12. Heterodimer with IL23A; disulfide-linked. The heterodimer is known as interleukin IL-23. Also secreted as a monomer. Interacts with NBR1; this interaction promotes IL-12 secretion.

The protein resides in the secreted. Its function is as follows. Cytokine that can act as a growth factor for activated T and NK cells, enhance the lytic activity of NK/lymphokine-activated killer cells, and stimulate the production of IFN-gamma by resting PBMC. Functionally, associates with IL23A to form the IL-23 interleukin, a heterodimeric cytokine which functions in innate and adaptive immunity. IL-23 may constitute with IL-17 an acute response to infection in peripheral tissues. IL-23 binds to a heterodimeric receptor complex composed of IL12RB1 and IL23R, activates the Jak-Stat signaling cascade, stimulates memory rather than naive T-cells and promotes production of pro-inflammatory cytokines. IL-23 induces autoimmune inflammation and thus may be responsible for autoimmune inflammatory diseases and may be important for tumorigenesis. The chain is Interleukin-12 subunit beta (IL12B) from Bos taurus (Bovine).